Here is a 431-residue protein sequence, read N- to C-terminus: Chaperone SurA (431 aa).

A signal peptide spans 1–20 (MKLTVVTFALLAFISFNTFA). PpiC domains follow at residues 171–272 (QAEY…KIID) and 281–381 (VAEL…QLMD).

The protein localises to the periplasm. It carries out the reaction [protein]-peptidylproline (omega=180) = [protein]-peptidylproline (omega=0). In terms of biological role, chaperone involved in the correct folding and assembly of outer membrane proteins. Recognizes specific patterns of aromatic residues and the orientation of their side chains, which are found more frequently in integral outer membrane proteins. May act in both early periplasmic and late outer membrane-associated steps of protein maturation. This Pseudoalteromonas atlantica (strain T6c / ATCC BAA-1087) protein is Chaperone SurA.